We begin with the raw amino-acid sequence, 218 residues long: Small ribosomal subunit protein uS3c (218 aa).

Residues 47–118 (VQKQIKNSSN…KIQITLKNVL (72 aa)) enclose the KH type-2 domain.

This sequence belongs to the universal ribosomal protein uS3 family. As to quaternary structure, part of the 30S ribosomal subunit.

Its subcellular location is the plastid. The protein localises to the chloroplast. This Angiopteris evecta (Mule's foot fern) protein is Small ribosomal subunit protein uS3c (rps3).